The chain runs to 732 residues: Alpha-galactosidase Mel36A (732 aa).

Substrate contacts are provided by residues 370–371 (DD), W415, R447, 480–484 (KWDMN), 530–533 (CSGG), and D552. D482 serves as the catalytic Nucleophile. Residue D552 is the Proton donor of the active site.

It belongs to the glycosyl hydrolase 36 family. Homotetramer.

It catalyses the reaction Hydrolysis of terminal, non-reducing alpha-D-galactose residues in alpha-D-galactosides, including galactose oligosaccharides, galactomannans and galactolipids.. Hydrolyzes the short-chain alpha-galactosaccharide raffinose. In Lactobacillus acidophilus (strain ATCC 700396 / NCK56 / N2 / NCFM), this protein is Alpha-galactosidase Mel36A.